A 466-amino-acid chain; its full sequence is 3-isopropylmalate dehydratase large subunit (466 aa).

The [4Fe-4S] cluster site is built by C347, C408, and C411.

The protein belongs to the aconitase/IPM isomerase family. LeuC type 1 subfamily. In terms of assembly, heterodimer of LeuC and LeuD. It depends on [4Fe-4S] cluster as a cofactor.

It carries out the reaction (2R,3S)-3-isopropylmalate = (2S)-2-isopropylmalate. It participates in amino-acid biosynthesis; L-leucine biosynthesis; L-leucine from 3-methyl-2-oxobutanoate: step 2/4. In terms of biological role, catalyzes the isomerization between 2-isopropylmalate and 3-isopropylmalate, via the formation of 2-isopropylmaleate. The protein is 3-isopropylmalate dehydratase large subunit of Herminiimonas arsenicoxydans.